The primary structure comprises 492 residues: Heat shock factor protein 4 (492 aa).

Residues 17–122 (VPAFLGKLWA…LLERVRRKVP (106 aa)) mediate DNA binding. The hydrophobic repeat HR-A/B stretch occupies residues 129-203 (SRWRPEDLSR…GPLQTGPSST (75 aa)). Residues 245–322 (LPETTLGLSP…ECDFCVTAPP (78 aa)) form an interactions with DUSP26, MAPK1 and MAPK2 region. The segment at 263 to 282 (SDIPEDSPSPEGHRLSPSGG) is disordered. Lysine 293 is covalently cross-linked (Glycyl lysine isopeptide (Lys-Gly) (interchain with G-Cter in SUMO)). A Phosphoserine modification is found at serine 298. Residues 337–378 (GSYSPEGPRSVQQPEPRGPREVPDRGTLGLDRGNRSPESLLP) form a disordered region. The interval 364-389 (LGLDRGNRSPESLLPPMLLRPAPETL) is hydrophobic repeat HR-C.

Belongs to the HSF family. As to quaternary structure, homotrimer. Exhibits constitutive DNA binding and forms trimers even in the absence of stress. Interacts with ALKBH4, DUSP26, MAPK1, MAPK2, MAPK8 and MAP kinase p38. In terms of processing, phosphorylated mainly on serine residues. Phosphorylation on Ser-298 promotes sumoylation on Lys-293. Post-translationally, isoform HSF4B is constitutively sumoylated. Sumoylation represses the transcriptional activity and is promoted by phosphorylation on Ser-298. HSFA is not sumoylated. Preferentially expressed in brain and lung. Also found in the eye. Slightly detected in liver and skeletal muscle. Isoform B is the major species in various tissues.

The protein localises to the nucleus. Its function is as follows. Heat-shock transcription factor that specifically binds heat shock promoter elements (HSE). Required for denucleation and organelle rupture and degradation that occur during eye lens terminal differentiation, when fiber cells that compose the lens degrade all membrane-bound organelles in order to provide lens with transparency to allow the passage of light. In this process, may regulate denucleation of lens fiber cells in part by activating DNASE2B transcription. May be involved in DNA repair through the transcriptional regulation of RAD51. May up-regulate p53/TP53 protein in eye lens fiber cells, possibly through protein stabilization. In the eye lens, controls the expression of alpha-crystallin B chain/CRYAB and consequently may be involved in the regulation of lysosomal acidification. Transcriptional repressor. Functionally, transcriptional activator. The sequence is that of Heat shock factor protein 4 (Hsf4) from Mus musculus (Mouse).